A 341-amino-acid polypeptide reads, in one-letter code: S-adenosylmethionine:tRNA ribosyltransferase-isomerase (341 aa).

This sequence belongs to the QueA family. Monomer.

It is found in the cytoplasm. It catalyses the reaction 7-aminomethyl-7-carbaguanosine(34) in tRNA + S-adenosyl-L-methionine = epoxyqueuosine(34) in tRNA + adenine + L-methionine + 2 H(+). It functions in the pathway tRNA modification; tRNA-queuosine biosynthesis. Its function is as follows. Transfers and isomerizes the ribose moiety from AdoMet to the 7-aminomethyl group of 7-deazaguanine (preQ1-tRNA) to give epoxyqueuosine (oQ-tRNA). The sequence is that of S-adenosylmethionine:tRNA ribosyltransferase-isomerase from Clostridium botulinum (strain ATCC 19397 / Type A).